The following is a 453-amino-acid chain: UDP-glycosyltransferase 79B6 (453 aa).

UDP-alpha-D-glucose is bound by residues Ser-266, 325–327, 342–350, and 364–367; these read VQQ, HCGFGSMWE, and LGEQ.

This sequence belongs to the UDP-glycosyltransferase family.

In Arabidopsis thaliana (Mouse-ear cress), this protein is UDP-glycosyltransferase 79B6 (UGT79B6).